The sequence spans 325 residues: Fatty acid synthase alpha subunit hexA (325 aa).

D209 is a binding site for Mg(2+). Residues 209–211 (DLV), 255–265 (EAVFKCLHTQT), 279–282 (KSDN), and 301–303 (ISH) contribute to the acetyl-CoA site. Position 302 (S302) interacts with Mg(2+).

It belongs to the thiolase-like superfamily. Fungal fatty acid synthetase subunit alpha family. As to quaternary structure, [Alpha(6)beta(6)] hexamers of two multifunctional subunits (alpha and beta). In terms of processing, 4'-phosphopantetheine is transferred from CoA to a specific serine of the acyl carrier domain by the C-terminal PPT domain. This modification is essential for activity because fatty acids are bound in thioester linkage to the sulfhydryl of the prosthetic group.

The catalysed reaction is acetyl-CoA + n malonyl-CoA + 2n NADPH + 4n H(+) = a long-chain-acyl-CoA + n CoA + n CO2 + 2n NADP(+).. It carries out the reaction a fatty acyl-[ACP] + malonyl-[ACP] + H(+) = a 3-oxoacyl-[ACP] + holo-[ACP] + CO2. The enzyme catalyses a (3R)-hydroxyacyl-[ACP] + NADP(+) = a 3-oxoacyl-[ACP] + NADPH + H(+). It participates in mycotoxin biosynthesis. Fatty acid synthase alpha subunit; part of the fragmented gene cluster that mediates the biosynthesis of dothistromin (DOTH), a polyketide toxin very similar in structure to the aflatoxin precursor, versicolorin B. The first step of the pathway is the conversion of acetate to norsolorinic acid (NOR) and requires the fatty acid synthase subunits hexA and hexB, as well as the polyketide synthase pksA. PksA combines a hexanoyl starter unit and 7 malonyl-CoA extender units to synthesize the precursor NOR. The hexanoyl starter unit is provided to the acyl-carrier protein (ACP) domain by the fungal fatty acid synthase hexA/hexB. The second step is the conversion of NOR to averantin (AVN) and requires the norsolorinic acid ketoreductase nor1, which catalyzes the dehydration of norsolorinic acid to form (1'S)-averantin. The cytochrome P450 monooxygenase avnA then catalyzes the hydroxylation of AVN to 5'hydroxyaverantin (HAVN). The next step is performed by adhA that transforms HAVN to averufin (AVF). Averufin might then be converted to hydroxyversicolorone by cypX and avfA. Hydroxyversicolorone is further converted versiconal hemiacetal acetate (VHA) by moxY. VHA is then the substrate for the versiconal hemiacetal acetate esterase est1 to yield versiconal (VAL). Versicolorin B synthase vbsA then converts VAL to versicolorin B (VERB) by closing the bisfuran ring. Then, the activity of the versicolorin B desaturase verB leads to versicolorin A (VERA). DotB, a predicted chloroperoxidase, may perform epoxidation of the A-ring of VERA. Alternatively, a cytochrome P450, such as cypX or avnA could catalyze this step. It is also possible that another, uncharacterized, cytochrome P450 enzyme is responsible for this step. Opening of the epoxide could potentially be achieved by the epoxide hydrolase epoA. However, epoA seems not to be required for DOTH biosynthesis, but other epoxide hydrolases may have the ability to complement this hydrolysis. Alternatively, opening of the epoxide ring could be achieved non-enzymatically. The next step is the deoxygenation of ring A to yield the 5,8-dihydroxyanthraquinone which is most likely catalyzed by the NADPH dehydrogenase encoded by ver1. The last stages of DOTH biosynthesis are proposed to involve hydroxylation of the bisfuran. OrdB and norB might have oxidative roles here. An alternative possibility is that cytochrome P450 monoogenases such as avnA and cypX might perform these steps in addition to previously proposed steps. In Dothistroma septosporum (Red band needle blight fungus), this protein is Fatty acid synthase alpha subunit hexA.